The following is a 292-amino-acid chain: Malonyl-S-ACP:biotin-protein carboxyltransferase MADD (292 aa).

One can recognise a CoA carboxyltransferase C-terminal domain in the interval 1–281 (MEIMMGQGRL…RGKVMAMMDK (281 aa)).

It localises to the cytoplasm. The enzyme catalyses N(6)-biotinyl-L-lysyl-[protein] + malonyl-[ACP] = N(6)-carboxybiotinyl-L-lysyl-[protein] + acetyl-[ACP]. Its function is as follows. Gamma subunit of the biotin-dependent malonate decarboxylase multienzyme complex (EC 7.2.4.4). The two subunits MADC and MADD are required for the transfer of the malonate carboxy group from the acyl-carrier protein (ACP) to the prosthetic group of the biotin carrier MADF. Required for the regeneration of ACP. The polypeptide is Malonyl-S-ACP:biotin-protein carboxyltransferase MADD (madD) (Malonomonas rubra).